The following is a 160-amino-acid chain: SsrA-binding protein (160 aa).

This sequence belongs to the SmpB family.

It is found in the cytoplasm. Its function is as follows. Required for rescue of stalled ribosomes mediated by trans-translation. Binds to transfer-messenger RNA (tmRNA), required for stable association of tmRNA with ribosomes. tmRNA and SmpB together mimic tRNA shape, replacing the anticodon stem-loop with SmpB. tmRNA is encoded by the ssrA gene; the 2 termini fold to resemble tRNA(Ala) and it encodes a 'tag peptide', a short internal open reading frame. During trans-translation Ala-aminoacylated tmRNA acts like a tRNA, entering the A-site of stalled ribosomes, displacing the stalled mRNA. The ribosome then switches to translate the ORF on the tmRNA; the nascent peptide is terminated with the 'tag peptide' encoded by the tmRNA and targeted for degradation. The ribosome is freed to recommence translation, which seems to be the essential function of trans-translation. In Mannheimia succiniciproducens (strain KCTC 0769BP / MBEL55E), this protein is SsrA-binding protein.